The chain runs to 449 residues: Protein phosphatase fem-2 (449 aa).

Residues 28 to 34 (EEAFADE) are interaction with fem-1 and fem-3. Residues 54–56 (IRF) form an interaction with fem-3 region. Residues 160-424 (GIHVSGDQLK…DNVSVVIGFL (265 aa)) form the PPM-type phosphatase domain. The Mg(2+) site is built by Asp-202, Gly-203, Asp-370, and Asp-415.

This sequence belongs to the PP2C family. As to quaternary structure, component of a complex containing fem-1, fem-2 and fem-3. Interacts (via N-terminus) with fem-1 and fem-3. Component of the CBC(fem-1) E3 ubiquitin-protein ligase complex, at least composed of cul-2, elc-1, tra-1, fem-1, fem-2 and fem-3; mediates the ubiquitination and subsequent proteasomal degradation of tra-1. Interacts with tra-1. Interacts with sel-10. Mg(2+) serves as cofactor. Mn(2+) is required as a cofactor.

The enzyme catalyses O-phospho-L-seryl-[protein] + H2O = L-seryl-[protein] + phosphate. The catalysed reaction is O-phospho-L-threonyl-[protein] + H2O = L-threonyl-[protein] + phosphate. Dephosphorylates auto-phosphorylated Ca(2+)/calmodulin-dependent protein kinase unc-43/CAMKII in vitro. Involved in the regulation of sex determination. Together with fem-3, required for male sexual development by promoting the proteasomal-mediated degradation of tra-1, a transcription repressor of male-specific genes. Promotes apoptosis. The protein is Protein phosphatase fem-2 of Caenorhabditis elegans.